A 268-amino-acid polypeptide reads, in one-letter code: Glutamate racemase (268 aa).

Substrate-binding positions include 9–10 and 41–42; these read DS and YG. The active-site Proton donor/acceptor is the C73. Residue 74 to 75 participates in substrate binding; that stretch reads NS. C183 acts as the Proton donor/acceptor in catalysis. Substrate is bound at residue 184–185; it reads TH.

Belongs to the aspartate/glutamate racemases family.

The enzyme catalyses L-glutamate = D-glutamate. The protein operates within cell wall biogenesis; peptidoglycan biosynthesis. Provides the (R)-glutamate required for cell wall biosynthesis. This is Glutamate racemase from Shewanella pealeana (strain ATCC 700345 / ANG-SQ1).